Consider the following 530-residue polypeptide: Alpha-(1,3)-fucosyltransferase 4 (530 aa).

Disordered regions lie at residues Met-1–Pro-48 and His-66–Ala-112. At Met-1–Arg-147 the chain is on the cytoplasmic side. Over residues Ala-88 to Cys-106 the composition is skewed to basic and acidic residues. The helical; Signal-anchor for type II membrane protein transmembrane segment at Gly-148–Trp-172 threads the bilayer. The Lumenal portion of the chain corresponds to Gly-173–Arg-530. Asn-216 and Asn-315 each carry an N-linked (GlcNAc...) asparagine glycan.

Belongs to the glycosyltransferase 10 family. Expressed at low levels in bone marrow-derived mesenchymal stem cells. As to expression, expressed in cord blood immature promyelocytes and in peripheral blood myeloid and lymphoid cell populations.

The protein localises to the golgi apparatus. It is found in the golgi stack membrane. It carries out the reaction a beta-D-galactosyl-(1-&gt;4)-N-acetyl-beta-D-glucosaminyl derivative + GDP-beta-L-fucose = a beta-D-galactosyl-(1-&gt;4)-[alpha-L-fucosyl-(1-&gt;3)]-N-acetyl-beta-D-glucosaminyl derivative + GDP + H(+). The catalysed reaction is an N-acetyl-alpha-neuraminyl-(2-&gt;3)-beta-D-galactosyl-(1-&gt;4)-N-acetyl-beta-D-glucosaminyl derivative + GDP-beta-L-fucose = an alpha-Neu5Ac-(2-&gt;3)-beta-D-Gal-(1-&gt;4)-[alpha-L-Fuc-(1-&gt;3)]-beta-D-GlcNAc derivative + GDP + H(+). It catalyses the reaction an alpha-Neu5Ac-(2-&gt;3)-beta-D-Gal-(1-&gt;4)-beta-D-GlcNAc-(1-&gt;3)-beta-D-Gal-(1-&gt;4)-beta-D-GlcNAc derivative + GDP-beta-L-fucose = an alpha-Neu5Ac-(2-&gt;3)-beta-D-Gal-(1-&gt;4)-beta-D-GlcNAc-(1-&gt;3)-beta-D-Gal-(1-&gt;4)-[alpha-L-Fuc-(1-&gt;3)]-beta-D-GlcNAc derivative + GDP + H(+). The enzyme catalyses an alpha-Neu5Ac-(2-&gt;3)-beta-D-Gal-(1-&gt;4)-beta-D-GlcNAc6S derivative + GDP-beta-L-fucose = an alpha-Neu5Ac-(2-&gt;3)-beta-D-Gal-(1-&gt;4)-[alpha-L-Fuc-(1-&gt;3)]-beta-D-GlcNAc6S derivative + GDP + H(+). The protein operates within protein modification; protein glycosylation. Its function is as follows. Catalyzes alpha(1-&gt;3) linkage of fucosyl moiety transferred from GDP-beta-L-fucose to N-acetyl glucosamine (GlcNAc) within type 2 lactosamine (LacNAc, Gal-beta(1-&gt;4)GlcNAc) glycan attached to N- or O-linked glycoproteins. Robustly fucosylates nonsialylated distal LacNAc unit of the polylactosamine chain to form Lewis X antigen (CD15), a glycan determinant known to mediate important cellular functions in development and immunity. Fucosylates with lower efficiency sialylated LacNAc acceptors to form sialyl Lewis X and 6-sulfo sialyl Lewis X determinants that serve as recognition epitopes for C-type lectins. Together with FUT7 contributes to SELE, SELL and SELP selectin ligand biosynthesis and selectin-dependent lymphocyte homing, leukocyte migration and blood leukocyte homeostasis. In a cell type specific manner, may also fucosylate the internal LacNAc unit of the polylactosamine chain to form VIM-2 antigen that serves as recognition epitope for SELE. In terms of biological role, does not generate Lewis X antigens. This Homo sapiens (Human) protein is Alpha-(1,3)-fucosyltransferase 4.